We begin with the raw amino-acid sequence, 583 residues long: J protein JJJ2 (583 aa).

The region spanning 11 to 79 is the J domain; it reads RTTYYSILGL…KLRYDRDLKI (69 aa). Positions 215–224 are enriched in polar residues; the sequence is SYSEDPNSCL. The interval 215 to 313 is disordered; sequence SYSEDPNSCL…SGSHDSNLQS (99 aa). Serine 229 is subject to Phosphoserine. Residues 240–252 are compositionally biased toward low complexity; the sequence is QQQQQQQQQQQQQ. The segment covering 262 to 281 has biased composition (basic and acidic residues); it reads SPDEEKKNNKEPKRESRVSP. Residues 298 to 313 show a composition bias toward polar residues; it reads KTSTFSSGSHDSNLQS.

It localises to the cytoplasm. Its subcellular location is the nucleus. The chain is J protein JJJ2 (JJJ2) from Saccharomyces cerevisiae (strain ATCC 204508 / S288c) (Baker's yeast).